Consider the following 828-residue polypeptide: MKLSRRSFMKANAVAAAAAAAGLSVPGVARAVVGQQEAIKWDKAPCRFCGTGCGVLVGTQQGRVVACQGDPDAPVNRGLNCIKGYFLPKIMYGKDRLTQPLLRMKNGKYDKEGEFTPITWDQAFDVMEDKFKTALKEKGPESIGMFGSGQWTIWEGYAASKLFKAGFRSNNIDPNARHCMASAVVGFMRTFGMDEPMGCYDDIEQADAFVLWGSNMAEMHPILWSRITNRRLSNQNVTVAVLSTYQHRSFELADNGIIFTPQSDLVILNYIANYIIQNNAINQDFFSKHVNLRKGATDIGYGLRPTHPLEKAAKNPGSDASEPMSFEDYKAFVAEYTLEKTAEMTGVPKDQLEQLAQLYADPNKKVISYWTMGFNQHTRGVWANNLVYNLHLLTGKISQPGCGPFSLTGQPSACGTAREVGTFAHRLPADMVVTNEKHRDICEKKWNIPSGTIPAKIGLHAVAQDRALKDGKLNVYWTMCTNNMQAGPNINEERMPGWRDPRNFIIVSDPYPTVSALAADLILPTAMWVEKEGAYGNAERRTQFWRQQVQAPGEAKSDLWQLVQFSRRFKTEEVWPEELLAKKPELRGKTLYDVLYATPEVSKFPVSELAEDQLNDESRELGFYLQKGLFEEYAWFGRGHGHDLAPFDDYHKARGLRWPVVNGKETQWRYSEGNDPYVKAGEGYKFYGKPDGKAVIFALPFEPAAEAPDEEYDLWLSTGRVLEHWHTGSMTRRVPELHRAFPEAVLFIHPLDAKARDLRRGDKVKVVSRRGEVISIVETRGRNRPPQGLVYMPFFDAAQLVNKLTLDATDPLSKETDFKKCAVKLEKV.

Residues 1–31 (MKLSRRSFMKANAVAAAAAAAGLSVPGVARA) constitute a signal peptide (tat-type signal). Residues 39–95 (IKWDKAPCRFCGTGCGVLVGTQQGRVVACQGDPDAPVNRGLNCIKGYFLPKIMYGKD) enclose the 4Fe-4S Mo/W bis-MGD-type domain. [4Fe-4S] cluster is bound by residues Cys46, Cys49, Cys53, and Cys81. Residues Lys83, Gln150, Asn175, Cys179, 212 to 219 (WGSNMAEM), 243 to 247 (STYQH), 262 to 264 (QSD), Met372, Gln376, Asn482, 508 to 509 (SD), Lys531, Asp558, and 718 to 727 (TGRVLEHWHT) contribute to the Mo-bis(molybdopterin guanine dinucleotide) site. Phe794 is a binding site for substrate. The Mo-bis(molybdopterin guanine dinucleotide) site is built by Asn802 and Lys819.

The protein belongs to the prokaryotic molybdopterin-containing oxidoreductase family. NasA/NapA/NarB subfamily. Component of the periplasmic nitrate reductase NapAB complex composed of NapA and NapB. [4Fe-4S] cluster is required as a cofactor. It depends on Mo-bis(molybdopterin guanine dinucleotide) as a cofactor. Post-translationally, predicted to be exported by the Tat system. The position of the signal peptide cleavage has not been experimentally proven.

It localises to the periplasm. It carries out the reaction 2 Fe(II)-[cytochrome] + nitrate + 2 H(+) = 2 Fe(III)-[cytochrome] + nitrite + H2O. Catalytic subunit of the periplasmic nitrate reductase complex NapAB. Receives electrons from NapB and catalyzes the reduction of nitrate to nitrite. The protein is Periplasmic nitrate reductase of Escherichia coli O81 (strain ED1a).